The following is a 410-amino-acid chain: Argininosuccinate synthase (410 aa).

A9–S17 is an ATP binding site. Y86 is a binding site for L-citrulline. G116 is a binding site for ATP. Residues T118, N122, and D123 each contribute to the L-aspartate site. N122 is a binding site for L-citrulline. L-citrulline contacts are provided by R126, S174, E259, and Y271.

This sequence belongs to the argininosuccinate synthase family. Type 1 subfamily. In terms of assembly, homotetramer.

It localises to the cytoplasm. The catalysed reaction is L-citrulline + L-aspartate + ATP = 2-(N(omega)-L-arginino)succinate + AMP + diphosphate + H(+). Its pathway is amino-acid biosynthesis; L-arginine biosynthesis; L-arginine from L-ornithine and carbamoyl phosphate: step 2/3. The polypeptide is Argininosuccinate synthase (Limosilactobacillus reuteri (strain DSM 20016) (Lactobacillus reuteri)).